The sequence spans 435 residues: Casein kinase I homolog 2 (435 aa).

Residues 12–282 enclose the Protein kinase domain; the sequence is YRVGRKIGEG…FLQELFDDVL (271 aa). Residues 18 to 26 and Lys41 contribute to the ATP site; that span reads IGEGSFGVI. Residue Asp131 is the Proton acceptor of the active site. Phosphoserine is present on Ser361.

It belongs to the protein kinase superfamily. CK1 Ser/Thr protein kinase family. Casein kinase I subfamily.

It localises to the cytoplasm. It carries out the reaction L-seryl-[protein] + ATP = O-phospho-L-seryl-[protein] + ADP + H(+). The catalysed reaction is L-threonyl-[protein] + ATP = O-phospho-L-threonyl-[protein] + ADP + H(+). Its function is as follows. Casein kinases are operationally defined by their preferential utilization of acidic proteins such as caseins as substrates. May contribute to the regulation of morphology. The polypeptide is Casein kinase I homolog 2 (cki2) (Schizosaccharomyces pombe (strain 972 / ATCC 24843) (Fission yeast)).